Reading from the N-terminus, the 389-residue chain is Succinate--CoA ligase [ADP-forming] subunit beta (389 aa).

In terms of domain architecture, ATP-grasp spans K9–K236. ATP is bound by residues K45, G52–G54, S94, and E99. 2 residues coordinate Mg(2+): N191 and D205. Substrate is bound by residues N256 and G318–T320.

Belongs to the succinate/malate CoA ligase beta subunit family. Heterotetramer of two alpha and two beta subunits. Requires Mg(2+) as cofactor.

The enzyme catalyses succinate + ATP + CoA = succinyl-CoA + ADP + phosphate. The catalysed reaction is GTP + succinate + CoA = succinyl-CoA + GDP + phosphate. Its pathway is carbohydrate metabolism; tricarboxylic acid cycle; succinate from succinyl-CoA (ligase route): step 1/1. Functionally, succinyl-CoA synthetase functions in the citric acid cycle (TCA), coupling the hydrolysis of succinyl-CoA to the synthesis of either ATP or GTP and thus represents the only step of substrate-level phosphorylation in the TCA. The beta subunit provides nucleotide specificity of the enzyme and binds the substrate succinate, while the binding sites for coenzyme A and phosphate are found in the alpha subunit. This chain is Succinate--CoA ligase [ADP-forming] subunit beta, found in Rhodococcus opacus (strain B4).